Consider the following 361-residue polypeptide: DNA replication and repair protein RecF (361 aa).

30–37 serves as a coordination point for ATP; the sequence is GDNAQGKT.

Belongs to the RecF family.

The protein localises to the cytoplasm. In terms of biological role, the RecF protein is involved in DNA metabolism; it is required for DNA replication and normal SOS inducibility. RecF binds preferentially to single-stranded, linear DNA. It also seems to bind ATP. The polypeptide is DNA replication and repair protein RecF (Clostridium botulinum (strain Alaska E43 / Type E3)).